The following is a 190-amino-acid chain: Holliday junction branch migration complex subunit RuvA (190 aa).

The domain I stretch occupies residues Met1–Lys63. The interval Asp64–Ala138 is domain II. Residues Ala138–Ser142 form a flexible linker region. The interval Tyr143–Leu190 is domain III.

This sequence belongs to the RuvA family. As to quaternary structure, homotetramer. Forms an RuvA(8)-RuvB(12)-Holliday junction (HJ) complex. HJ DNA is sandwiched between 2 RuvA tetramers; dsDNA enters through RuvA and exits via RuvB. An RuvB hexamer assembles on each DNA strand where it exits the tetramer. Each RuvB hexamer is contacted by two RuvA subunits (via domain III) on 2 adjacent RuvB subunits; this complex drives branch migration. In the full resolvosome a probable DNA-RuvA(4)-RuvB(12)-RuvC(2) complex forms which resolves the HJ.

It localises to the cytoplasm. In terms of biological role, the RuvA-RuvB-RuvC complex processes Holliday junction (HJ) DNA during genetic recombination and DNA repair, while the RuvA-RuvB complex plays an important role in the rescue of blocked DNA replication forks via replication fork reversal (RFR). RuvA specifically binds to HJ cruciform DNA, conferring on it an open structure. The RuvB hexamer acts as an ATP-dependent pump, pulling dsDNA into and through the RuvAB complex. HJ branch migration allows RuvC to scan DNA until it finds its consensus sequence, where it cleaves and resolves the cruciform DNA. The polypeptide is Holliday junction branch migration complex subunit RuvA (Petrotoga mobilis (strain DSM 10674 / SJ95)).